Consider the following 250-residue polypeptide: Prolactin-7A2 (250 aa).

A signal peptide spans 1-29 (MQLSFSRPRPWTLLLMVVSNLLLWENVSS). Asn-26, Asn-35, Asn-102, and Asn-134 each carry an N-linked (GlcNAc...) asparagine glycan. Cystine bridges form between Cys-100–Cys-215 and Cys-232–Cys-241.

This sequence belongs to the somatotropin/prolactin family. Expression restricted to placental tissues. Trophoblast giant cells are found to be the major source.

Its subcellular location is the secreted. This is Prolactin-7A2 (Prl7a2) from Rattus norvegicus (Rat).